Reading from the N-terminus, the 249-residue chain is Homeobox-leucine zipper protein HOX6 (249 aa).

Residues 1–32 (MDGEEDSEWMMMDVGGKGGKGGGGGGAADRKK) are disordered. Residues 15–27 (GGKGGKGGGGGGA) show a composition bias toward gly residues. The segment at residues 27–86 (AADRKKRFSEEQIKSLESMFATQTKLEPRQKLQLARELGLQPRQVAIWFQNKRARWKSKQ) is a DNA-binding region (homeobox). Residues 85–129 (KQLEREYSALRDDYDALLCSYESLKKEKLALIKQLEKLAEMLQEP) form a leucine-zipper region. The disordered stretch occupies residues 194 to 249 (FLRPSSQHHPPPPHAGAGFTSSEPAADHQSFNFHSSWPSSTEQTCSSTPWWEFESE). The segment covering 212–242 (FTSSEPAADHQSFNFHSSWPSSTEQTCSSTP) has biased composition (polar residues).

Belongs to the HD-ZIP homeobox family. Class I subfamily. In terms of tissue distribution, expressed in seedlings, roots, leaves, nodes, internodes, flowers and embryo.

The protein localises to the nucleus. Its function is as follows. Probable transcription factor that binds to the DNA sequence 5'-CAAT[AT]ATTG-3'. The protein is Homeobox-leucine zipper protein HOX6 (HOX6) of Oryza sativa subsp. indica (Rice).